The following is a 712-amino-acid chain: Polyribonucleotide nucleotidyltransferase (712 aa).

Mg(2+) contacts are provided by Asp-487 and Asp-493. The KH domain maps to 554 to 613; that stretch reads PKIITMTINPDKIRDVIGPSGKQINKIIEETGVKIDIEQDGTVFISSINQEMNDKAKKII. In terms of domain architecture, S1 motif spans 623 to 691; that stretch reads GEIYEGKVKR…KQGRVNLSRK (69 aa).

This sequence belongs to the polyribonucleotide nucleotidyltransferase family. Mg(2+) serves as cofactor.

Its subcellular location is the cytoplasm. The catalysed reaction is RNA(n+1) + phosphate = RNA(n) + a ribonucleoside 5'-diphosphate. Functionally, involved in mRNA degradation. Catalyzes the phosphorolysis of single-stranded polyribonucleotides processively in the 3'- to 5'-direction. This chain is Polyribonucleotide nucleotidyltransferase, found in Bacillus cereus (strain G9842).